Reading from the N-terminus, the 233-residue chain is Inner kinetochore subunit fta4 (233 aa).

2 positions are modified to phosphothreonine: threonine 189 and threonine 191.

This sequence belongs to the NKP1 family. In terms of assembly, component of the inner kinetochore constitutive centromere-associated network (CCAN) (also known as central kinetochore Sim4 complex in fission yeast), which is composed of at least cnl2, cnp3, cnp20, fta1, fta2, fta3, fta4, fta6, fta7, mal2, mhf1, mhf2, mis6, mis15, mis17, sim4 and wip1.

The protein localises to the nucleus. It localises to the chromosome. Its subcellular location is the centromere. The protein resides in the kinetochore. Component of the kinetochore, a multiprotein complex that assembles on centromeric DNA and attaches chromosomes to spindle microtubules, mediating chromosome segregation and sister chromatid segregation during meiosis and mitosis. Component of the inner kinetochore constitutive centromere-associated network (CCAN), which serves as a structural platform for outer kinetochore assembly. Fta2, fta3 and fta4 associate with the central core (cnt) and inner repeat (inr) region of the centromere. The chain is Inner kinetochore subunit fta4 (fta4) from Schizosaccharomyces pombe (strain 972 / ATCC 24843) (Fission yeast).